We begin with the raw amino-acid sequence, 179 residues long: Prion-like protein doppel (179 aa).

The signal sequence occupies residues 1–25; the sequence is MKNRLGTWWVAILCMLLASHLSTVK. The interval 27-50 is flexible tail; it reads RGIKHRFKWNRKVLPSSGGQITEA. Positions 51–155 are globular; it reads RVAENRPGAF…KHCDFWLERG (105 aa). 2 disulfides stabilise this stretch: Cys95–Cys148 and Cys109–Cys143. Asn99 and Asn111 each carry an N-linked (GlcNAc...) asparagine glycan. Residues 125 to 142 are cu(2+) binding; the sequence is KQDSKLHQRVLWRLIKEI. A lipid anchor (GPI-anchor amidated glycine) is attached at Gly155. Residues 156–179 constitute a propeptide, removed in mature form; that stretch reads AALRVAVDQPAMVCLLGFVWFIVK.

It belongs to the prion family. In terms of processing, N-glycosylated. N-glycosylated at two distinct sites. O-glycosylated. Detected in testis. Detected within seminiferous tubules, on round and elongated spermatids (at protein level). Not detected in brain (at protein level). Detected in testis, and at low levels in heart. Expression in brain is very low and barely detectable.

It is found in the cell membrane. Required for normal acrosome reaction and for normal male fertility. Can bind Cu(2+). The polypeptide is Prion-like protein doppel (Prnd) (Mus musculus (Mouse)).